Consider the following 102-residue polypeptide: Urease subunit beta (102 aa).

Belongs to the urease beta subunit family. In terms of assembly, heterotrimer of UreA (gamma), UreB (beta) and UreC (alpha) subunits. Three heterotrimers associate to form the active enzyme.

The protein localises to the cytoplasm. The enzyme catalyses urea + 2 H2O + H(+) = hydrogencarbonate + 2 NH4(+). It functions in the pathway nitrogen metabolism; urea degradation; CO(2) and NH(3) from urea (urease route): step 1/1. This Methylobacillus flagellatus (strain ATCC 51484 / DSM 6875 / VKM B-1610 / KT) protein is Urease subunit beta.